The chain runs to 171 residues: Adenine phosphoribosyltransferase (171 aa).

The protein belongs to the purine/pyrimidine phosphoribosyltransferase family. In terms of assembly, homodimer.

It localises to the cytoplasm. The catalysed reaction is AMP + diphosphate = 5-phospho-alpha-D-ribose 1-diphosphate + adenine. The protein operates within purine metabolism; AMP biosynthesis via salvage pathway; AMP from adenine: step 1/1. Functionally, catalyzes a salvage reaction resulting in the formation of AMP, that is energically less costly than de novo synthesis. This Acidiphilium cryptum (strain JF-5) protein is Adenine phosphoribosyltransferase.